The chain runs to 244 residues: Phosphoadenosine 5'-phosphosulfate reductase (244 aa).

Cys239 serves as the catalytic Nucleophile; cysteine thiosulfonate intermediate.

The protein belongs to the PAPS reductase family. CysH subfamily.

It localises to the cytoplasm. It catalyses the reaction [thioredoxin]-disulfide + sulfite + adenosine 3',5'-bisphosphate + 2 H(+) = [thioredoxin]-dithiol + 3'-phosphoadenylyl sulfate. It functions in the pathway sulfur metabolism; hydrogen sulfide biosynthesis; sulfite from sulfate: step 3/3. Functionally, catalyzes the formation of sulfite from phosphoadenosine 5'-phosphosulfate (PAPS) using thioredoxin as an electron donor. This chain is Phosphoadenosine 5'-phosphosulfate reductase, found in Shigella flexneri.